A 327-amino-acid polypeptide reads, in one-letter code: Malate dehydrogenase (327 aa).

Residue G12 to G18 participates in NAD(+) binding. Substrate-binding residues include R93 and R99. Residues N106, Q113, and V130–N132 each bind NAD(+). Substrate is bound by residues N132 and R163. H188 serves as the catalytic Proton acceptor.

Belongs to the LDH/MDH superfamily. MDH type 2 family.

The enzyme catalyses (S)-malate + NAD(+) = oxaloacetate + NADH + H(+). In terms of biological role, catalyzes the reversible oxidation of malate to oxaloacetate. The sequence is that of Malate dehydrogenase from Cupriavidus pinatubonensis (strain JMP 134 / LMG 1197) (Cupriavidus necator (strain JMP 134)).